We begin with the raw amino-acid sequence, 144 residues long: Maximins 9/H3 (144 aa).

The signal sequence occupies residues 1–18 (MNFKYIVAVSFLIASAYA). The propeptide occupies 19 to 43 (RSVKNDEQSLSQRDVLEEESLREIR). Tyrosine amide is present on tyrosine 70. Residues 74–123 (TAEEHEVMKRLEAIMRDLDSLDHPEEASERETRGFNQDEIANLFTKKEKR) constitute a propeptide that is removed on maturation. The residue at position 143 (isoleucine 143) is an Isoleucine amide.

The protein belongs to the bombinin family. As to expression, expressed by the skin glands.

Its subcellular location is the secreted. Maximin-9 shows antimicrobial activity against bacteria and against the fungus C.albicans. It has little hemolytic activity. In terms of biological role, maximin-H3 shows antibacterial activity against both Gram-positive and Gram-negative bacteria. It also shows antimicrobial activity against the fungus C.albicans. Shows strong hemolytic activity. This is Maximins 9/H3 from Bombina maxima (Giant fire-bellied toad).